A 286-amino-acid chain; its full sequence is ATP synthase gamma chain (286 aa).

It belongs to the ATPase gamma chain family. F-type ATPases have 2 components, CF(1) - the catalytic core - and CF(0) - the membrane proton channel. CF(1) has five subunits: alpha(3), beta(3), gamma(1), delta(1), epsilon(1). CF(0) has three main subunits: a, b and c.

Its subcellular location is the cell inner membrane. Functionally, produces ATP from ADP in the presence of a proton gradient across the membrane. The gamma chain is believed to be important in regulating ATPase activity and the flow of protons through the CF(0) complex. This is ATP synthase gamma chain from Shewanella loihica (strain ATCC BAA-1088 / PV-4).